The following is a 450-amino-acid chain: Probable ECA polymerase (450 aa).

A run of 11 helical transmembrane segments spans residues 6–26, 37–57, 63–83, 118–138, 155–175, 181–201, 207–227, 228–248, 341–361, 378–398, and 410–430; these read FSGL…LTWF, VFFS…TSVL, VGVA…CFYA, VILM…NGFL, GVAL…VYFL, AWLF…MIVG, IIIA…ISLW, MLAA…LKRY, LVVM…GLII, YKAA…IVLA, and VFFI…YWLF.

This sequence belongs to the WzyE family. In terms of assembly, probably part of a complex composed of WzxE, WzyE and WzzE.

Its subcellular location is the cell inner membrane. Its pathway is bacterial outer membrane biogenesis; enterobacterial common antigen biosynthesis. Functionally, probably involved in the polymerization of enterobacterial common antigen (ECA) trisaccharide repeat units. This chain is Probable ECA polymerase, found in Shigella flexneri.